Consider the following 119-residue polypeptide: Ribonuclease P protein component (119 aa).

The protein belongs to the RnpA family. In terms of assembly, consists of a catalytic RNA component (M1 or rnpB) and a protein subunit.

It catalyses the reaction Endonucleolytic cleavage of RNA, removing 5'-extranucleotides from tRNA precursor.. In terms of biological role, RNaseP catalyzes the removal of the 5'-leader sequence from pre-tRNA to produce the mature 5'-terminus. It can also cleave other RNA substrates such as 4.5S RNA. The protein component plays an auxiliary but essential role in vivo by binding to the 5'-leader sequence and broadening the substrate specificity of the ribozyme. This chain is Ribonuclease P protein component, found in Borreliella burgdorferi (strain ATCC 35210 / DSM 4680 / CIP 102532 / B31) (Borrelia burgdorferi).